Consider the following 303-residue polypeptide: Elongation factor Ts (303 aa).

The interval 81–84 is involved in Mg(2+) ion dislocation from EF-Tu; it reads TDFV.

Belongs to the EF-Ts family.

It is found in the cytoplasm. In terms of biological role, associates with the EF-Tu.GDP complex and induces the exchange of GDP to GTP. It remains bound to the aminoacyl-tRNA.EF-Tu.GTP complex up to the GTP hydrolysis stage on the ribosome. This Mesomycoplasma hyopneumoniae (strain J / ATCC 25934 / NCTC 10110) (Mycoplasma hyopneumoniae) protein is Elongation factor Ts.